A 456-amino-acid polypeptide reads, in one-letter code: Protein translocase subunit SecY (456 aa).

Residues 1–21 (MEQLKEKFEPLFSVLPQVKSP) lie on the Cytoplasmic side of the membrane. A helical transmembrane segment spans residues 22-48 (GYRVPFREKLKWTGIILVLYFFLAQIP). The Extracellular segment spans residues 49 to 59 (LYGLSANAVDQ). Residues 60 to 67 (FAQFRAVL) constitute an intramembrane region (helical). Residues 60–88 (FAQFRAVLAGNFGSILTLGIGPIVSASII) form a discontinuously helical membrane-spanning segment. An intramembrane segment occupies 68 to 79 (AGNFGSILTLGI). Positions 80–88 (GPIVSASII) form an intramembrane region, helical. The Cytoplasmic segment spans residues 89–109 (LQLLVGGKILKLDLSRHEDKA). A helical membrane pass occupies residues 110–134 (FFQGLQKLLAIVFTFFEALIFVLTG). The Extracellular portion of the chain corresponds to 135–141 (SLAPSAP). The chain crosses the membrane as a helical span at residues 142 to 166 (QFVWVLILQLTIGGILIIFLDEVVS). The Cytoplasmic portion of the chain corresponds to 167 to 172 (KWGFGS). Residues 173-191 (GVGLFIAAGVSQEIIVGAF) form a helical membrane-spanning segment. At 192–224 (NPLSAPTQPGVPAGRITGFLYLLFTGQSPDFQY) the chain is on the extracellular side. The helical transmembrane segment at 225–246 (YVLPVLALIAVFLVVVYAESMR) threads the bilayer. Topologically, residues 247-275 (VEIPISMGGGKRLSRGAVGKYPLRFIYAS) are cytoplasmic. A helical membrane pass occupies residues 276–297 (NMPVILTSALLLNVQLLANVFQ). Topologically, residues 298–334 (KLGYPILGTVSNGQAVDGLAYLLTAPRSIDALILDPF) are extracellular. The chain crosses the membrane as a helical span at residues 335 to 354 (RVVFYAVVFIGLCVLFAWLW). The Cytoplasmic portion of the chain corresponds to 355–397 (VEISNIGPRHVARQLYQMGMQIPGFRSSRGQFEKILKRYIPTI). The chain crosses the membrane as a helical span at residues 398-416 (TILGGAFVGLLAFVADLTG). The Extracellular portion of the chain corresponds to 417–419 (SLG). A helical membrane pass occupies residues 420–434 (GGTGVLLTVGIVYRL). Topologically, residues 435–456 (YEEIAQEQLMDMHPILRSFLGD) are cytoplasmic.

It belongs to the SecY/SEC61-alpha family. In terms of assembly, component of the Sec protein translocase complex. Heterotrimer consisting of alpha (SecY), beta (SecG) and gamma (SecE) subunits. The heterotrimers can form oligomers, although 1 heterotrimer is thought to be able to translocate proteins. Interacts with the ribosome. May interact with SecDF, and other proteins may be involved.

The protein resides in the cell membrane. Functionally, the central subunit of the protein translocation channel SecYEG. Consists of two halves formed by TMs 1-5 and 6-10. These two domains form a lateral gate at the front which open onto the bilayer between TMs 2 and 7, and are clamped together by SecE at the back. The channel is closed by both a pore ring composed of hydrophobic SecY resides and a short helix (helix 2A) on the extracellular side of the membrane which forms a plug. The plug probably moves laterally to allow the channel to open. The ring and the pore may move independently. The polypeptide is Protein translocase subunit SecY (Methanothermobacter thermautotrophicus (strain ATCC 29096 / DSM 1053 / JCM 10044 / NBRC 100330 / Delta H) (Methanobacterium thermoautotrophicum)).